We begin with the raw amino-acid sequence, 485 residues long: Probable carboxypeptidase S-like 1 (485 aa).

The first 21 residues, 1 to 21 (MIFKFFFIFFLIILVIKISES), serve as a signal peptide directing secretion. His-111 lines the Zn(2+) pocket. Residue Asp-113 is part of the active site. Asp-142 contributes to the Zn(2+) binding site. The active-site Proton acceptor is Glu-177. Zn(2+)-binding residues include Glu-178, Asp-204, and His-431.

Belongs to the peptidase M20A family. Zn(2+) is required as a cofactor.

It localises to the secreted. This Dictyostelium discoideum (Social amoeba) protein is Probable carboxypeptidase S-like 1.